A 248-amino-acid polypeptide reads, in one-letter code: tRNA1(Val) (adenine(37)-N6)-methyltransferase (248 aa).

This sequence belongs to the methyltransferase superfamily. tRNA (adenine-N(6)-)-methyltransferase family.

The protein resides in the cytoplasm. It carries out the reaction adenosine(37) in tRNA1(Val) + S-adenosyl-L-methionine = N(6)-methyladenosine(37) in tRNA1(Val) + S-adenosyl-L-homocysteine + H(+). In terms of biological role, specifically methylates the adenine in position 37 of tRNA(1)(Val) (anticodon cmo5UAC). This chain is tRNA1(Val) (adenine(37)-N6)-methyltransferase, found in Pectobacterium carotovorum subsp. carotovorum (strain PC1).